Here is a 328-residue protein sequence, read N- to C-terminus: Dolichyl-diphosphooligosaccharide--protein glycosyltransferase subunit MAGT1 (328 aa).

Positions 1–22 (MAALPVLVLVLLLACGGPRAAG) are cleaved as a signal peptide. Over 23–177 (QKRKEMVLSE…DVNIRVIRPP (155 aa)) the chain is Extracellular. Residues 40–168 (WTSKRSVIRM…LARWVADRTD (129 aa)) enclose the Thioredoxin domain. N-linked (GlcNAc...) asparagine glycosylation is present at N64. C80 and C83 are oxidised to a cystine. A helical transmembrane segment spans residues 178–198 (NYAGPLMLGLLLAVIGGLVYL). Over 199 to 211 (RGSNLDFLYNKTG) the chain is Cytoplasmic. Residues 212–232 (WAFAALCFVLAMTSGQMWNHI) traverse the membrane as a helical segment. Residues 233–257 (RGPPYAHKNPHTGQVNYIHGSSQAQ) lie on the Extracellular side of the membrane. Residues 258 to 278 (FVAETHIVLLFNGGVTLGMVL) form a helical membrane-spanning segment. The Cytoplasmic portion of the chain corresponds to 279–293 (LHEAATSDMDVGKRK). Residues 294 to 314 (IMCIAGIGLVVFFFSWLLSVF) form a helical membrane-spanning segment. Topologically, residues 315–328 (RSKYHGYPYSFLMS) are extracellular.

The protein belongs to the OST3/OST6 family. In terms of assembly, accessory component of the STT3B-containing form of the oligosaccharyltransferase (OST) complex. OST exists in two different complex forms which contain common core subunits RPN1, RPN2, OST48, OST4, DAD1 and TMEM258, either STT3A or STT3B as catalytic subunits, and form-specific accessory subunits. OST can form stable complexes with the Sec61 complex or with both the Sec61 and TRAP complexes.

It localises to the cell membrane. The protein resides in the endoplasmic reticulum. Its subcellular location is the endoplasmic reticulum membrane. Its pathway is protein modification; protein glycosylation. Accessory component of the STT3B-containing form of the N-oligosaccharyl transferase (OST) complex which catalyzes the transfer of a high mannose oligosaccharide from a lipid-linked oligosaccharide donor to an asparagine residue within an Asn-X-Ser/Thr consensus motif in nascent polypeptide chains. Involved in N-glycosylation of STT3B-dependent substrates. Specifically required for the glycosylation of a subset of acceptor sites that are near cysteine residues; in this function seems to act redundantly with TUSC3. In its oxidized form proposed to form transient mixed disulfides with a glycoprotein substrate to facilitate access of STT3B to the unmodified acceptor site. Also has oxidoreductase-independent functions in the STT3B-containing OST complex possibly involving substrate recognition. Could indirectly play a role in Mg(2+) transport in epithelial cells. This chain is Dolichyl-diphosphooligosaccharide--protein glycosyltransferase subunit MAGT1, found in Gallus gallus (Chicken).